Consider the following 211-residue polypeptide: tRNA (pseudouridine(54)-N(1))-methyltransferase (211 aa).

Leu128, Gly150, and Cys183 together coordinate S-adenosyl-L-methionine.

It belongs to the methyltransferase superfamily. TrmY family. In terms of assembly, homodimer.

The protein localises to the cytoplasm. It carries out the reaction pseudouridine(54) in tRNA + S-adenosyl-L-methionine = N(1)-methylpseudouridine(54) in tRNA + S-adenosyl-L-homocysteine + H(+). In terms of biological role, specifically catalyzes the N1-methylation of pseudouridine at position 54 (Psi54) in tRNAs. This is tRNA (pseudouridine(54)-N(1))-methyltransferase from Methanosarcina mazei (strain ATCC BAA-159 / DSM 3647 / Goe1 / Go1 / JCM 11833 / OCM 88) (Methanosarcina frisia).